The following is a 743-amino-acid chain: Putative pre-mRNA-splicing factor ATP-dependent RNA helicase DHX32 (743 aa).

Methionine 1 carries the N-acetylmethionine modification. Residues 1–28 (MEEEGLECPNSSSEKRYFPESLDSSDGD) form a disordered region. The 167-residue stretch at 72 to 238 (MENLLQNQIV…YGNVPVIEVK (167 aa)) folds into the Helicase ATP-binding domain. 85–92 (GDAKCGKS) contacts ATP. The DEAH box motif lies at 185–188 (DDIH).

The protein belongs to the DEAD box helicase family. DEAH subfamily. Expressed in lymphoid tissues (at protein level). Expressed in brain, heart, skeletal muscle, colon, thymus, spleen, kidney, liver, small intestine, placenta, lung, lymphoid tissues and blood leukocytes.

The protein resides in the nucleus. Its subcellular location is the mitochondrion. It carries out the reaction ATP + H2O = ADP + phosphate + H(+). The sequence is that of Putative pre-mRNA-splicing factor ATP-dependent RNA helicase DHX32 (DHX32) from Homo sapiens (Human).